The sequence spans 291 residues: Probable 2-(5''-triphosphoribosyl)-3'-dephosphocoenzyme-A synthase (291 aa).

Belongs to the CitG/MdcB family.

The catalysed reaction is 3'-dephospho-CoA + ATP = 2'-(5''-triphospho-alpha-D-ribosyl)-3'-dephospho-CoA + adenine. Functionally, involved in the formation of 2-(5''-phosphoribosyl)-3'-dephosphocoenzyme-A, the prosthetic group of the acyl-carrier protein of the malonate decarboxylase. This Pseudomonas savastanoi pv. phaseolicola (strain 1448A / Race 6) (Pseudomonas syringae pv. phaseolicola (strain 1448A / Race 6)) protein is Probable 2-(5''-triphosphoribosyl)-3'-dephosphocoenzyme-A synthase.